The primary structure comprises 997 residues: Synaptonemal complex protein 1 (997 aa).

The Mediates head to head self-assembly of N-terminal ends motif lies at proline 102–lysine 112. The Nuclear localization signal motif lies at lysine 118–lysine 121. Coiled-coil stretches lie at residues lysine 121–glutamate 176 and tyrosine 212–serine 696. Residues glutamate 207–glutamine 363 form an interaction with SYCE3 region. Residues glutamate 698–glutamate 792 are required for pH-induced assembly of C-terminal ends into antiparallel tetramers. A Nuclear localization signal motif is present at residues leucine 701 to valine 704. A coiled-coil region spans residues lysine 768–threonine 806. Positions asparagine 805–threonine 997 are DNA-binding. Position 824 is a phosphoserine (serine 824). The disordered stretch occupies residues threonine 828–alanine 863. Over residues lysine 835–serine 851 the composition is skewed to polar residues. The segment covering glycine 852–leucine 861 has biased composition (basic and acidic residues). The Nuclear localization signal motif lies at lysine 902–lysine 905. Residue threonine 940 is modified to Phosphothreonine.

As to quaternary structure, structural component of synaptonemal complexes. Homotetramer that consists of an N-terminal four-helical bundle that bifurcates into two elongated C-terminal dimeric coiled coils. This tetrameric building block potentially self-assembles into a supramolecular zipper-like lattice to mediate meiotic chromosome synapsis. Self-assembly is likely initiated by local proton density at chromosome axis, which is predicted to trigger antiparallel back to back assembly of adjacent C-terminal ends into tetrameric structures that anchor to chromosomal DNA. Then the N-terminal ends are predicted to undergo cooperative antiparallel head to head assembly at the midline of synaptonemal complexes central element to form a zipper-like lattice between properly aligned homologous chromosomes. The nascent synapsis generated by SYCP1 is stabilized through interaction with central element proteins SYCE1 and SYCE2. Interacts (via tetrameric core) with SYCE3; the interaction remodels SYCP1 homotetramers to 2:1 heterotrimers with SYCE3. SYCP1/SYCE3 heterotrimers form lattice assemblies as part of the mature synaptonemal complex via both lateral and head-to-head interactions. Forms a complex with EWSR1, PRDM9, SYCP3 and REC8; complex formation is dependent of phosphorylated form of REC8 and requires PRDM9 bound to hotspot DNA; EWSR1 joins PRDM9 with the chromosomal axis through REC8. Interacts with SPO16. As to expression, testis.

It localises to the nucleus. The protein localises to the chromosome. It is found in the centromere. Its function is as follows. Major component of the transverse filaments of synaptonemal complexes, formed between homologous chromosomes during meiotic prophase. Required for normal assembly of the central element of the synaptonemal complexes. Required for normal centromere pairing during meiosis. Required for normal meiotic chromosome synapsis during oocyte and spermatocyte development and for normal male and female fertility. The chain is Synaptonemal complex protein 1 from Rattus norvegicus (Rat).